We begin with the raw amino-acid sequence, 521 residues long: MGRKKIQIQRITDERNRQVTFTKRKFGLMKKAYELSVLCDCEIALIIFNHSNKLFQYASTDMDKVLLKYTEYNEPHESRTNADIIETLRKKGFNGCDSPEPDGEDSLEQSPLLEDKYRRASEELDGLFRRYGSTVPAPNFAMPVTVPVSNQSSLQFSNPSGSLVTPSLVTSSLTDPRLLSPQQPALQRNSVSPGLPQRPASAGAMLGGDLNSANGACPSPVGNGYVSARASPGLLPVANGNSLNKVIPAKSPPPPTHSTQLGAPSRKPDLRVITSQAGKGLMHHLTEDHLDLNNAQRLGVSQSTHSLTTPVVSVATPSLLSQGLPFSSMPTAYNTDYQLTSAELSSLPAFSSPGGLSLGNVTAWQQPQQPQQPQQPQPPQQQPPQPQQPQPQQPQQPQQPPQQQSHLVPVSLSNLIPGSPLPHVGAALTVTTHPHISIKSEPVSPSRERSPAPPPPAVFPAARPEPGDGLSSPAGGSYETGDRDDGRGDFGPTLGLLRPAPEPEAEGSAVKRMRLDTWTLK.

Residues 3-57 form the MADS-box domain; that stretch reads RKKIQIQRITDERNRQVTFTKRKFGLMKKAYELSVLCDCEIALIIFNHSNKLFQY. A DNA-binding region (mef2-type) is located at residues 58–86; sequence ASTDMDKVLLKYTEYNEPHESRTNADIIE. Residues S98, S106, and S110 each carry the phosphoserine modification. S121 is subject to Phosphoserine; by PKA. Residues 174–207 are disordered; the sequence is TDPRLLSPQQPALQRNSVSPGLPQRPASAGAMLG. Phosphoserine; by MAPK7 is present on S180. Polar residues predominate over residues 180–192; the sequence is SPQQPALQRNSVS. At S190 the chain carries Phosphoserine; by PKA. S231 is modified (phosphoserine). The segment at 244 to 266 is disordered; that stretch reads NKVIPAKSPPPPTHSTQLGAPSR. The residue at position 245 (K245) is an N6-acetyllysine. Position 251 is a phosphoserine (S251). Positions 286-292 are beta domain; that stretch reads TEDHLDL. Disordered regions lie at residues 357-407 and 437-521; these read SLGN…QSHL and SIKS…WTLK. Residues 373 to 400 are compositionally biased toward pro residues; sequence PQQPQPPQQQPPQPQQPQPQQPQQPQQP. Residue K439 is modified to N6-acetyllysine; alternate. K439 is covalently cross-linked (Glycyl lysine isopeptide (Lys-Gly) (interchain with G-Cter in SUMO); alternate). The residue at position 444 (S444) is a Phosphoserine.

The protein belongs to the MEF2 family. As to quaternary structure, interacts with MYOG. Forms a complex with class II HDACs in undifferentiating cells. On myogenic differentiation, HDACs are released into the cytoplasm allowing MEF2s to interact with other proteins for activation. Interacts with HDAC4 (in undifferentiating cells); the interaction translocates MEF2D to nuclear dots. Forms a heterodimer with MEF2A. Interacts with MAPK7; the interaction phosphorylates but does not activate MEF2D. Interacts with CCAR2 and HDAC3. Post-translationally, phosphorylated on Ser-444 by CDK5 is required for Lys-439 sumoylation and inhibits transcriptional activity. In neurons, enhanced CDK5 activity induced by neurotoxins promotes caspase 3-mediated cleavage leading to neuron apoptosis. Phosphorylation on Ser-180 can be enhanced by EGF. Phosphorylated and activated by CaMK4. In terms of processing, acetylated on Lys-439 by CREBBP. Acetylated by EP300. Deacetylated by SIRT1 and HDAC3. Sumoylated on Lys-439 with SUMO2 but not SUMO1; which inhibits transcriptional activity and myogenic activity. Desumoylated by SENP3. Post-translationally, proteolytically cleaved in cerebellar granule neurons on several sites by caspase 7 following neurotoxicity. Preferentially cleaves the CDK5-mediated hyperphosphorylated form which leads to neuron apoptosis and transcriptional inactivation.

It is found in the nucleus. In terms of biological role, transcriptional activator which binds specifically to the MEF2 element, 5'-YTA[AT](4)TAR-3', found in numerous muscle-specific, growth factor- and stress-induced genes. Mediates cellular functions not only in skeletal and cardiac muscle development, but also in neuronal differentiation and survival. Plays diverse roles in the control of cell growth, survival and apoptosis via p38 MAPK signaling in muscle-specific and/or growth factor-related transcription. Plays a critical role in the regulation of neuronal apoptosis. This chain is Myocyte-specific enhancer factor 2D (MEF2D), found in Homo sapiens (Human).